The sequence spans 105 residues: DNA-directed RNA polymerase subunit omega (105 aa).

The protein belongs to the RNA polymerase subunit omega family. As to quaternary structure, the RNAP catalytic core consists of 2 alpha, 1 beta, 1 beta' and 1 omega subunit. When a sigma factor is associated with the core the holoenzyme is formed, which can initiate transcription.

The catalysed reaction is RNA(n) + a ribonucleoside 5'-triphosphate = RNA(n+1) + diphosphate. Functionally, promotes RNA polymerase assembly. Latches the N- and C-terminal regions of the beta' subunit thereby facilitating its interaction with the beta and alpha subunits. In Streptococcus pyogenes serotype M12 (strain MGAS2096), this protein is DNA-directed RNA polymerase subunit omega.